Here is an 896-residue protein sequence, read N- to C-terminus: Translation initiation factor IF-2 (896 aa).

The segment at 32-306 (LAQAGSSDTK…HKTKKQSEEH (275 aa)) is disordered. 2 stretches are compositionally biased toward polar residues: residues 35–48 (AGSS…VSKA) and 114–126 (ADST…SSQE). Over residues 156–170 (ARNEETPIIRTRTEP) the composition is skewed to basic and acidic residues. Over residues 213 to 237 (QQTRPSVETASTKQQQPSGTNTRPA) the composition is skewed to polar residues. Over residues 256–280 (RGPDRDRTKRSDENVKAFTGRDRYG) the composition is skewed to basic and acidic residues. One can recognise a tr-type G domain in the interval 401-570 (IRSPIVAFMG…ALQAEVLELK (170 aa)). The segment at 410–417 (GHVDHGKT) is G1. Residue 410 to 417 (GHVDHGKT) participates in GTP binding. Residues 435–439 (AITQH) are G2. The interval 456 to 459 (DTPG) is G3. GTP-binding positions include 456 to 460 (DTPGH) and 510 to 513 (NKCD). A G4 region spans residues 510 to 513 (NKCD). Positions 546–548 (SAK) are G5.

The protein belongs to the TRAFAC class translation factor GTPase superfamily. Classic translation factor GTPase family. IF-2 subfamily.

It is found in the cytoplasm. Functionally, one of the essential components for the initiation of protein synthesis. Protects formylmethionyl-tRNA from spontaneous hydrolysis and promotes its binding to the 30S ribosomal subunits. Also involved in the hydrolysis of GTP during the formation of the 70S ribosomal complex. The chain is Translation initiation factor IF-2 (infB) from Chlamydia muridarum (strain MoPn / Nigg).